The sequence spans 194 residues: 7-methyl-GTP pyrophosphatase (194 aa).

Residue Asp67 is the Proton acceptor of the active site.

This sequence belongs to the Maf family. YceF subfamily. Requires a divalent metal cation as cofactor.

Its subcellular location is the cytoplasm. The enzyme catalyses N(7)-methyl-GTP + H2O = N(7)-methyl-GMP + diphosphate + H(+). Functionally, nucleoside triphosphate pyrophosphatase that hydrolyzes 7-methyl-GTP (m(7)GTP). May have a dual role in cell division arrest and in preventing the incorporation of modified nucleotides into cellular nucleic acids. The polypeptide is 7-methyl-GTP pyrophosphatase (Pseudoalteromonas atlantica (strain T6c / ATCC BAA-1087)).